We begin with the raw amino-acid sequence, 485 residues long: Iroquois-class homeodomain protein IRX-4 (485 aa).

The homeobox; TALE-type DNA-binding region spans 142–203; sequence GTRRKNATRE…NARRRLKKEN (62 aa). Residues 206–313 form a disordered region; it reads TWPPRNKCSD…EEEEAAERAR (108 aa). Residues 221–232 show a composition bias toward acidic residues; the sequence is EEEEEEEEECSQ. Residues 234-253 show a composition bias toward basic and acidic residues; that stretch reads DAMKSEKAEEPTGKEEKELE. The segment covering 254–269 has biased composition (acidic residues); that stretch reads LSDLEDLDAAESESSE. Over residues 282 to 294 the composition is skewed to pro residues; that stretch reads HPLPGGGPPPRAA.

It belongs to the TALE/IRO homeobox family. As to expression, ventricles of the heart, developing feather buds, retina, hindbrain.

It localises to the nucleus. Its function is as follows. Regulates the chamber-specific expression of myosin isoforms by activating the expression of the ventricle myosin heavy chain-1 (Vmhc1) and suppressing the expression of the atrial myosin heavy chain-1 (Amhc1) in the ventricles. May play a critical role in establishing chamber-specific gene expression in the developing heart. The sequence is that of Iroquois-class homeodomain protein IRX-4 (IRX4) from Gallus gallus (Chicken).